Here is a 524-residue protein sequence, read N- to C-terminus: Alkaline phosphatase, tissue-nonspecific isozyme (524 aa).

A signal peptide spans 1 to 17 (MISPFLVLAIGTCLTNS). D60 contributes to the Mg(2+) binding site. The Zn(2+) site is built by D60 and S110. S110 acts as the Phosphoserine intermediate in catalysis. Phosphoserine is present on S110. The cysteines at positions 139 and 201 are disulfide-linked. N140 carries N-linked (GlcNAc...) asparagine glycosylation. T173 is a Mg(2+) binding site. N230 is a glycosylation site (N-linked (GlcNAc...) asparagine). Position 235 (E235) interacts with Ca(2+). An N-linked (GlcNAc...) asparagine glycan is attached at N271. Ca(2+) contacts are provided by F290 and E291. N302 is a glycosylation site (N-linked (GlcNAc...) asparagine). D306 contributes to the Ca(2+) binding site. E332 is a binding site for Mg(2+). D337, H341, D378, and H379 together coordinate Zn(2+). N430 carries an N-linked (GlcNAc...) asparagine glycan. Zn(2+) is bound at residue H454. C489 and C497 are disulfide-bonded. A lipid anchor (GPI-anchor amidated serine) is attached at S499. A propeptide spans 500–524 (ASSAGGPSPGPLFLLLALPSLGILF) (removed in mature form).

This sequence belongs to the alkaline phosphatase family. As to quaternary structure, homodimer. The cofactor is Mg(2+). Zn(2+) serves as cofactor. It depends on Ca(2+) as a cofactor. In terms of processing, N-glycosylated.

It is found in the cell membrane. Its subcellular location is the extracellular vesicle membrane. The protein resides in the mitochondrion membrane. The protein localises to the mitochondrion intermembrane space. The catalysed reaction is a phosphate monoester + H2O = an alcohol + phosphate. The enzyme catalyses diphosphate + H2O = 2 phosphate + H(+). It carries out the reaction pyridoxal 5'-phosphate + H2O = pyridoxal + phosphate. It catalyses the reaction phosphoethanolamine + H2O = ethanolamine + phosphate. The catalysed reaction is N-phosphocreatine + H2O = creatine + phosphate. The enzyme catalyses ATP + H2O = ADP + phosphate + H(+). It carries out the reaction ADP + H2O = AMP + phosphate + H(+). It catalyses the reaction AMP + H2O = adenosine + phosphate. Its activity is regulated as follows. Phosphatase activity is specifically inhibited by 5-((5-chloro-2-methoxyphenyl)sulfonamido)nicotinamide (SBI-425). Functionally, alkaline phosphatase that metabolizes various phosphate compounds and plays a key role in skeletal mineralization and adaptive thermogenesis. Has broad substrate specificity and can hydrolyze a considerable variety of compounds: however, only a few substrates, such as diphosphate (inorganic pyrophosphate; PPi), pyridoxal 5'-phosphate (PLP) and N-phosphocreatine are natural substrates. Plays an essential role in skeletal and dental mineralization via its ability to hydrolyze extracellular diphosphate, a potent mineralization inhibitor, to phosphate: it thereby promotes hydroxyapatite crystal formation and increases inorganic phosphate concentration. Acts in a non-redundant manner with PHOSPHO1 in skeletal mineralization: while PHOSPHO1 mediates the initiation of hydroxyapatite crystallization in the matrix vesicles (MVs), ALPL/TNAP catalyzes the spread of hydroxyapatite crystallization in the extracellular matrix. Also promotes dephosphorylation of osteopontin (SSP1), an inhibitor of hydroxyapatite crystallization in its phosphorylated state; it is however unclear whether ALPL/TNAP mediates SSP1 dephosphorylation via a direct or indirect manner. Catalyzes dephosphorylation of PLP to pyridoxal (PL), the transportable form of vitamin B6, in order to provide a sufficient amount of PLP in the brain, an essential cofactor for enzymes catalyzing the synthesis of diverse neurotransmitters. Additionally, also able to mediate ATP degradation in a stepwise manner to adenosine, thereby regulating the availability of ligands for purinergic receptors. Also capable of dephosphorylating microbial products, such as lipopolysaccharides (LPS) as well as other phosphorylated small-molecules, such as poly-inosine:cytosine (poly I:C). Acts as a key regulator of adaptive thermogenesis as part of the futile creatine cycle: localizes to the mitochondria of thermogenic fat cells and acts by mediating hydrolysis of N-phosphocreatine to initiate a futile cycle of creatine dephosphorylation and phosphorylation. During the futile creatine cycle, creatine and N-phosphocreatine are in a futile cycle, which dissipates the high energy charge of N-phosphocreatine as heat without performing any mechanical or chemical work. This chain is Alkaline phosphatase, tissue-nonspecific isozyme (ALPL), found in Felis catus (Cat).